Reading from the N-terminus, the 769-residue chain is MSIATSLGFPRIGRRRELKSALEAHWAGELSEAGLQEAARLLRAESHSLQQGLGIGHIPSNDFALYDHVLDTACMVGAIPPGYGWRGGEVTLPTYFALARGTGGGDAAAGLPALEMTKWFDTNYHYLVPRLAAGQHFAVTANRPLALFREALARHRRTRPVLLGPVSFLLLAKTDDGSDPLDLLDRLLPCYAQVLAELAAEGCAWVQMDEPVLALDLAPKARAALRHAYETLARGATPRLLLASYFAPIADNLPTALALPVAGLHLDLVRGRDDLAPVLAAIGPATWLSLGLVDGRNVWRADLRAALATAREAARALGGSERLMIAPSCSLLHVPVDLAQEDRLDPAIRPWLAFATQKLAEVATIARGLDEGEGAIAEALEASDAALRTRRDSARVHRTDVAARLLGATPEMERRPAPHAARRARQRQRLPLPAFPTTTIGSLPQTSGVRRTRAALARGEIGAAEYDEAIATWTEDAIRLQERIGLDVLVHGEFERNDMVKYFGEQLDGFAFTRHGWVQSYGSRCVAPPIIWGDVARPRPMTVRWARHAQSLTARPVKGMLTGPVTMLQWSFVRDDLPRETVCRQIALALRDEVADLEAAGLAIIQVDEPAFREGLPLRTADREAYLRWAVSCFRLATAVVRDDTAIHTHMCYAEFQDIMPAIATMDADAISIETARSRMELLEAFAGHGPSAYPAEIGPGVWDIHSPRIPPEEEILALLRLARRKLADDQLWVNPDCGLKTRNWREVIPALENLVGAARRLRAEAIPA.

Residues 16-19 (RELK) and Lys-118 contribute to the 5-methyltetrahydropteroyltri-L-glutamate site. Residues 440–442 (IGS) and Glu-493 contribute to the L-homocysteine site. L-methionine-binding positions include 440 to 442 (IGS) and Glu-493. Residues 524 to 525 (RC) and Trp-570 contribute to the 5-methyltetrahydropteroyltri-L-glutamate site. Asp-608 contacts L-homocysteine. Residue Asp-608 coordinates L-methionine. A 5-methyltetrahydropteroyltri-L-glutamate-binding site is contributed by Glu-614. Zn(2+) contacts are provided by His-650, Cys-652, and Glu-674. His-706 functions as the Proton donor in the catalytic mechanism. Cys-738 is a Zn(2+) binding site.

It belongs to the vitamin-B12 independent methionine synthase family. Requires Zn(2+) as cofactor.

The catalysed reaction is 5-methyltetrahydropteroyltri-L-glutamate + L-homocysteine = tetrahydropteroyltri-L-glutamate + L-methionine. Its pathway is amino-acid biosynthesis; L-methionine biosynthesis via de novo pathway; L-methionine from L-homocysteine (MetE route): step 1/1. Its function is as follows. Catalyzes the transfer of a methyl group from 5-methyltetrahydrofolate to homocysteine resulting in methionine formation. The protein is 5-methyltetrahydropteroyltriglutamate--homocysteine methyltransferase of Acidiphilium cryptum (strain JF-5).